Reading from the N-terminus, the 420-residue chain is Tyrosine--tRNA ligase (420 aa).

Tyr39 is a binding site for L-tyrosine. The 'HIGH' region motif lies at 44-53; it reads CTAPSLHIGS. The L-tyrosine site is built by Tyr176 and Gln180. The 'KMSKS' region motif lies at 236–240; the sequence is KMGKT. Lys239 is an ATP binding site. The 66-residue stretch at 349–414 folds into the S4 RNA-binding domain; it reads IPLIDLLYDT…AGKKRHIKIL (66 aa).

This sequence belongs to the class-I aminoacyl-tRNA synthetase family. TyrS type 1 subfamily. Homodimer.

The protein localises to the cytoplasm. The enzyme catalyses tRNA(Tyr) + L-tyrosine + ATP = L-tyrosyl-tRNA(Tyr) + AMP + diphosphate + H(+). Its function is as follows. Catalyzes the attachment of tyrosine to tRNA(Tyr) in a two-step reaction: tyrosine is first activated by ATP to form Tyr-AMP and then transferred to the acceptor end of tRNA(Tyr). This Wolbachia pipientis subsp. Culex pipiens (strain wPip) protein is Tyrosine--tRNA ligase.